The following is a 319-amino-acid chain: MVKLASNENPYGPSPKAIEAFRSYSDLHIYPNPEYRELREKISDYTGWDADRVVVGAGIDGILETLFRILIDEGDEVVIPIPTFPYYHILTKLSCGKEVLVRRGENYRIDESIFDAITQKTKIILICNPNNPTGNAEDAKLIEELVNSTNALIFLDEAYVEFSDVSFSVDAENVVIARTFSKAFGLANLRIGYALLPEWLVSPFRAAMTPFPLSTPAAKAAEAALDDVEWMRSCVGRIKAERERLYKELKKLVEVNLSQANFLFFESPVENLAEELLKRGVIVRDCSSFVGCGNHIRVTVGRPEENDMFLEALKEVLGC.

An N6-(pyridoxal phosphate)lysine modification is found at lysine 182.

It belongs to the class-II pyridoxal-phosphate-dependent aminotransferase family. Histidinol-phosphate aminotransferase subfamily. Requires pyridoxal 5'-phosphate as cofactor.

It carries out the reaction L-histidinol phosphate + 2-oxoglutarate = 3-(imidazol-4-yl)-2-oxopropyl phosphate + L-glutamate. It participates in amino-acid biosynthesis; L-histidine biosynthesis; L-histidine from 5-phospho-alpha-D-ribose 1-diphosphate: step 7/9. The sequence is that of Histidinol-phosphate aminotransferase 1 (hisC1) from Archaeoglobus fulgidus (strain ATCC 49558 / DSM 4304 / JCM 9628 / NBRC 100126 / VC-16).